A 182-amino-acid chain; its full sequence is Orotate phosphoribosyltransferase (182 aa).

Residues Arg-91, Lys-92, Lys-95, His-97, and 117-125 (EDVTTTGGS) contribute to the 5-phospho-alpha-D-ribose 1-diphosphate site. The orotate site is built by Thr-121 and Arg-149.

It belongs to the purine/pyrimidine phosphoribosyltransferase family. PyrE subfamily. As to quaternary structure, homodimer. Mg(2+) is required as a cofactor.

It catalyses the reaction orotidine 5'-phosphate + diphosphate = orotate + 5-phospho-alpha-D-ribose 1-diphosphate. It participates in pyrimidine metabolism; UMP biosynthesis via de novo pathway; UMP from orotate: step 1/2. Catalyzes the transfer of a ribosyl phosphate group from 5-phosphoribose 1-diphosphate to orotate, leading to the formation of orotidine monophosphate (OMP). This Pyrococcus abyssi (strain GE5 / Orsay) protein is Orotate phosphoribosyltransferase.